The sequence spans 277 residues: Protein OPG166 (277 aa).

N-linked (GlcNAc...) asparagine; by host glycans are attached at residues Asn29 and Asn58. The next 5 helical transmembrane spans lie at 124–144 (TMLMFIFTGITLFLLFLEITY), 156–176 (GILQVFGCVIAMIELCGAFLF), 186–206 (IIGLLMMTLPSIFLIITKVFS), 219–239 (LIIYYQLAGYILTVLGLGLSL), and 247–267 (LLLSGLGTIMVSEHFSLLFLV).

Belongs to the orthopoxvirus OPG166 protein family.

The protein resides in the host membrane. Promotes, when overexpressed, the influx of extracellular Ca(2+), leading to membrane permeability and host cell necrosis. The chain is Protein OPG166 (OPG166) from Vaccinia virus (strain Copenhagen) (VACV).